The sequence spans 506 residues: MFAVELLERLGLPTIYLWIGFVLVVLLAYPTYFAIYNLYFHPLRKFPGPLIARSSYIWYAKNWIGGRWPHALSDLHEKYGQVVRIAPDELAFSSAQSWRDIYGHSVKGKKYFRKTDWYAGVGDLPNSISTEPDPQKHSAMRRVLANAFSNSVLKGQADVINKYLDMFVSQIKKHDNPNGIPVEEWFNWLTFDIIGDLTFHESFGAVENARTHFWIHLIINGNFIRSLYPIFQKIPISRLFMKWIIPNMDEIRQQRREHIAHTNSKAMKRANRDDIVQKDFFSFLLGKEGADTSEMFLTAQAHTLIIAGSETTAVTLTAMVSFLLRYPDKMKILIDEVRGAFTDKSQINVEGTLPLEYLFAVIEETLRILPPVPFGLPRTCPGAVIDGHVVPEGTIVSVSPYTASHDVRYWHDPEGWHPERWLPSDHPLHNPVFDQDNKEASKPFSTGPRVCLGVNLAYIELRMTLARLLFEFDMELLSKPVDWNTELDFFQFWKKVETRVKFTSLH.

The chain crosses the membrane as a helical span at residues 15-35 (IYLWIGFVLVVLLAYPTYFAI). Position 451 (Cys-451) interacts with heme.

The protein belongs to the cytochrome P450 family. It depends on heme as a cofactor.

Its subcellular location is the membrane. Its pathway is polyketide biosynthesis. In terms of biological role, cytochrome P450 monooxygenase; part of the gene cluster A that mediates the biosynthesis of botcinic acid and its botcinin derivatives, acetate-derived polyketides that contribute to virulence when combined with the sesquiterpene botrydial. Botcinic acid and its derivatives have been shown to induce chlorosis and necrosis during host plant infection, but also have antifungal activities. Two polyketide synthases, BOA6 and BOA9, are involved in the biosynthesis of botcinins. BOA6 mediates the formation of the per-methylated tetraketide core by condensation of four units of malonyl-CoA with one unit of acetyl-CoA, which would be methylated in activated methylene groups to yield a bicyclic acid intermediate that could then either be converted to botrylactone derivatives or lose the starter acetate unit through a retro-Claisen type C-C bond cleavage to yield botcinin derivatives. The second polyketide synthase, BOA9, is probably required for the biosynthesis of the tetraketide side chain of botcinins. The methyltransferase (MT) domain within BOA6 is probably responsible for the incorporation of four methyl groups. The trans-enoyl reductase BOA5 might take over the enoyl reductase function of BOA6 that misses an ER domain. The monooxygenases BOA2, BOA3 and BOA4 might be involved in further hydroxylations at C4, C5 and C8, whereas BOA7, close to BOA9, could potentially be involved in the hydroxylation at C4 in the side chain of botcinins. The sequence is that of Cytochrome P450 monooxygenase BOA3 from Botryotinia fuckeliana (strain B05.10) (Noble rot fungus).